A 229-amino-acid chain; its full sequence is UPF0758 protein MA_1979 (229 aa).

Residues 106–228 (KICSPKDVYA…YVSLKDEGFV (123 aa)) form the MPN domain. Residues histidine 177, histidine 179, and aspartate 190 each contribute to the Zn(2+) site. Residues 177–190 (HNHPSGDPSPSRED) carry the JAMM motif motif.

It belongs to the UPF0758 family.

This Methanosarcina acetivorans (strain ATCC 35395 / DSM 2834 / JCM 12185 / C2A) protein is UPF0758 protein MA_1979.